We begin with the raw amino-acid sequence, 1462 residues long: DNA polymerase alpha catalytic subunit (1462 aa).

Disordered stretches follow at residues 1–33 (MAPV…GRQE) and 98–123 (DLED…KRNV). Basic residues predominate over residues 20 to 29 (RARREKKSKK). Positions 106–116 (ADEKGKDGKAR) are enriched in basic and acidic residues. A Phosphothreonine modification is found at T174. Residues S186, S190, and S209 each carry the phosphoserine modification. K224 is subject to N6-acetyllysine. The tract at residues 232–251 (DVQVESTEEEQESGAMEFED) is disordered. At T406 the chain carries Phosphothreonine. The tract at residues 650-715 (RINVCKAPHW…YHLSELVQQI (66 aa)) is DNA-binding. Position 970 is an N6-succinyllysine (K970). A DNA-binding region spans residues 1245 to 1376 (QFRVHHYHKD…TGPLCPACMK (132 aa)). Zn(2+) contacts are provided by C1283, C1286, C1310, C1315, C1348, C1353, C1371, and C1374. The CysA-type zinc-finger motif lies at 1283 to 1318 (CPTCGTENIYDNVFDGSGTDMEPSLYRCSNIDCKAS). The short motif at 1348–1374 (CEEPTCRNRTRHLPLQFSRTGPLCPAC) is the CysB motif element.

Belongs to the DNA polymerase type-B family. In terms of assembly, component of the alpha DNA polymerase complex (also known as the alpha DNA polymerase-primase complex) consisting of four subunits: the catalytic subunit POLA1, the regulatory subunit POLA2, and the primase complex subunits PRIM1 and PRIM2 respectively. Interacts with PARP1; this interaction functions as part of the control of replication fork progression. Interacts with MCM10 and WDHD1; these interactions recruit the polymerase alpha complex to the pre-replicative complex bound to DNA. Interacts with RPA1; this interaction stabilizes the replicative complex and reduces the misincorporation rate of DNA polymerase alpha by acting as a fidelity clamp. As to quaternary structure, (Microbial infection) Interacts with SV40 Large T antigen; this interaction allows viral DNA replication. (Microbial infection) Interacts with herpes simplex virus 1/HHV-1 replication origin-binding protein UL9. Post-translationally, a 165 kDa form is probably produced by proteolytic cleavage at Lys-124.

The protein resides in the nucleus. It localises to the cytoplasm. The protein localises to the cytosol. The enzyme catalyses DNA(n) + a 2'-deoxyribonucleoside 5'-triphosphate = DNA(n+1) + diphosphate. Autoinhibited in apo-primosome, where the zinc motif of POLA1 and oligonucleotide/olicosaccharide-binding domain of POLA2 are placed into the active site blocking RNA:DNA duplex entry. Functionally, catalytic subunit of the DNA polymerase alpha complex (also known as the alpha DNA polymerase-primase complex) which plays an essential role in the initiation of DNA synthesis. During the S phase of the cell cycle, the DNA polymerase alpha complex (composed of a catalytic subunit POLA1, a regulatory subunit POLA2 and two primase subunits PRIM1 and PRIM2) is recruited to DNA at the replicative forks via direct interactions with MCM10 and WDHD1. The primase subunit of the polymerase alpha complex initiates DNA synthesis by oligomerising short RNA primers on both leading and lagging strands. These primers are initially extended by the polymerase alpha catalytic subunit and subsequently transferred to polymerase delta and polymerase epsilon for processive synthesis on the lagging and leading strand, respectively. The reason this transfer occurs is because the polymerase alpha has limited processivity and lacks intrinsic 3' exonuclease activity for proofreading error, and therefore is not well suited for replicating long complexes. In the cytosol, responsible for a substantial proportion of the physiological concentration of cytosolic RNA:DNA hybrids, which are necessary to prevent spontaneous activation of type I interferon responses. The chain is DNA polymerase alpha catalytic subunit (POLA1) from Homo sapiens (Human).